The chain runs to 83 residues: Tetracenomycin polyketide synthase acyl carrier protein (83 aa).

One can recognise a Carrier domain in the interval 3 to 83 (QIGLPRLVEI…VNTETAGEVA (81 aa)). An O-(pantetheine 4'-phosphoryl)serine modification is found at S41.

As to quaternary structure, the tetracenomycin polyketide synthase (TCM PKS) is composed of a ketosynthase complex (TcmKL), an acyl carrier protein (TcmM), a cyclase (TcmN) and a probable second cyclase (TcmJ). Pantetheine 4'-phosphate is required as a cofactor. In terms of processing, 4'-phosphopantetheine is transferred from CoA to a specific serine of apo-ACP.

The enzyme catalyses 10 malonyl-CoA + 8 H(+) = tetracenomycin F2 + 10 CO2 + 10 CoA + 2 H2O. Its pathway is antibiotic biosynthesis; tetracenomycin C biosynthesis. Its function is as follows. Involved in the biosynthesis of tetracenomycin C (TCM C). Part of a type II polyketide synthase (PKS) that catalyzes the synthesis of tetracenomycin F2 (TCM F2), a precursor of TCM C, from malonyl-CoA. TcmM is an acyl carrier protein that serves as an acceptor of malonate from malonyl-CoA and acts as the tether for the substrates and intermediates of polyketide assembly. The malonyl CoA-acyl carrier protein transacylase FabD (MCT) is required to catalyze the transacylation between malonyl-CoA and TcmM, although a relatively slow spontaneous self-malonylation of TcmM also occurs in a reaction without the MCT. This chain is Tetracenomycin polyketide synthase acyl carrier protein, found in Streptomyces glaucescens.